A 277-amino-acid polypeptide reads, in one-letter code: Putative phosphoenolpyruvate synthase regulatory protein (277 aa).

157–164 (GVSRCGKT) is a binding site for ADP.

This sequence belongs to the pyruvate, phosphate/water dikinase regulatory protein family. PSRP subfamily.

It carries out the reaction [pyruvate, water dikinase] + ADP = [pyruvate, water dikinase]-phosphate + AMP + H(+). The catalysed reaction is [pyruvate, water dikinase]-phosphate + phosphate + H(+) = [pyruvate, water dikinase] + diphosphate. Functionally, bifunctional serine/threonine kinase and phosphorylase involved in the regulation of the phosphoenolpyruvate synthase (PEPS) by catalyzing its phosphorylation/dephosphorylation. In Klebsiella pneumoniae (strain 342), this protein is Putative phosphoenolpyruvate synthase regulatory protein.